The sequence spans 270 residues: Glucosamine-6-phosphate deaminase (270 aa).

Asp68 (proton acceptor; for enolization step) is an active-site residue. Asp145 functions as the For ring-opening step in the catalytic mechanism. His147 functions as the Proton acceptor; for ring-opening step in the catalytic mechanism. Glu152 functions as the For ring-opening step in the catalytic mechanism.

It belongs to the glucosamine/galactosamine-6-phosphate isomerase family. NagB subfamily.

The catalysed reaction is alpha-D-glucosamine 6-phosphate + H2O = beta-D-fructose 6-phosphate + NH4(+). It functions in the pathway amino-sugar metabolism; N-acetylneuraminate degradation; D-fructose 6-phosphate from N-acetylneuraminate: step 5/5. Its function is as follows. Catalyzes the reversible isomerization-deamination of glucosamine 6-phosphate (GlcN6P) to form fructose 6-phosphate (Fru6P) and ammonium ion. The protein is Glucosamine-6-phosphate deaminase of Bifidobacterium longum subsp. infantis (strain ATCC 15697 / DSM 20088 / JCM 1222 / NCTC 11817 / S12).